A 68-amino-acid chain; its full sequence is DNA-directed RNA polymerase subunit omega (68 aa).

This sequence belongs to the RNA polymerase subunit omega family. The RNAP catalytic core consists of 2 alpha, 1 beta, 1 beta' and 1 omega subunit. When a sigma factor is associated with the core the holoenzyme is formed, which can initiate transcription.

It carries out the reaction RNA(n) + a ribonucleoside 5'-triphosphate = RNA(n+1) + diphosphate. In terms of biological role, promotes RNA polymerase assembly. Latches the N- and C-terminal regions of the beta' subunit thereby facilitating its interaction with the beta and alpha subunits. The sequence is that of DNA-directed RNA polymerase subunit omega from Neisseria gonorrhoeae (strain NCCP11945).